Here is a 453-residue protein sequence, read N- to C-terminus: Bifunctional protein GlmU (453 aa).

Positions 1–225 are pyrophosphorylase; sequence MNIVILAAGT…EWETLGVNSK (225 aa). UDP-N-acetyl-alpha-D-glucosamine is bound by residues 6–9, Lys-20, Gln-71, 76–77, 98–100, Gly-135, Glu-150, Asn-165, and Asn-223; these read LAAG, GT, and YGD. Asp-100 contributes to the Mg(2+) binding site. Asn-223 serves as a coordination point for Mg(2+). The segment at 226-246 is linker; sequence AQLAELERIHQRNVADALLAD. The tract at residues 247–453 is N-acetyltransferase; it reads GVTLADPARI…GYVRPVKKKS (207 aa). UDP-N-acetyl-alpha-D-glucosamine-binding residues include Arg-329 and Lys-347. The active-site Proton acceptor is the His-359. Positions 362 and 373 each coordinate UDP-N-acetyl-alpha-D-glucosamine. Residues Ala-376, 382-383, Ser-401, and Ala-419 each bind acetyl-CoA; that span reads NY.

In the N-terminal section; belongs to the N-acetylglucosamine-1-phosphate uridyltransferase family. It in the C-terminal section; belongs to the transferase hexapeptide repeat family. As to quaternary structure, homotrimer. Requires Mg(2+) as cofactor.

It is found in the cytoplasm. It carries out the reaction alpha-D-glucosamine 1-phosphate + acetyl-CoA = N-acetyl-alpha-D-glucosamine 1-phosphate + CoA + H(+). The catalysed reaction is N-acetyl-alpha-D-glucosamine 1-phosphate + UTP + H(+) = UDP-N-acetyl-alpha-D-glucosamine + diphosphate. Its pathway is nucleotide-sugar biosynthesis; UDP-N-acetyl-alpha-D-glucosamine biosynthesis; N-acetyl-alpha-D-glucosamine 1-phosphate from alpha-D-glucosamine 6-phosphate (route II): step 2/2. It participates in nucleotide-sugar biosynthesis; UDP-N-acetyl-alpha-D-glucosamine biosynthesis; UDP-N-acetyl-alpha-D-glucosamine from N-acetyl-alpha-D-glucosamine 1-phosphate: step 1/1. It functions in the pathway bacterial outer membrane biogenesis; LPS lipid A biosynthesis. Its function is as follows. Catalyzes the last two sequential reactions in the de novo biosynthetic pathway for UDP-N-acetylglucosamine (UDP-GlcNAc). The C-terminal domain catalyzes the transfer of acetyl group from acetyl coenzyme A to glucosamine-1-phosphate (GlcN-1-P) to produce N-acetylglucosamine-1-phosphate (GlcNAc-1-P), which is converted into UDP-GlcNAc by the transfer of uridine 5-monophosphate (from uridine 5-triphosphate), a reaction catalyzed by the N-terminal domain. The polypeptide is Bifunctional protein GlmU (Burkholderia multivorans (strain ATCC 17616 / 249)).